Consider the following 301-residue polypeptide: Probable alpha-L-glutamate ligase 1 (301 aa).

The ATP-grasp domain maps to 104 to 287 (LQLLSRKGIG…VTEPIVEYIE (184 aa)). Residues lysine 141, 178–179 (EY), aspartate 187, and 211–213 (RSN) each bind ATP. The Mg(2+) site is built by aspartate 248, glutamate 260, and asparagine 262. Residues aspartate 248, glutamate 260, and asparagine 262 each coordinate Mn(2+).

This sequence belongs to the RimK family. Mg(2+) serves as cofactor. The cofactor is Mn(2+).

In Shewanella oneidensis (strain ATCC 700550 / JCM 31522 / CIP 106686 / LMG 19005 / NCIMB 14063 / MR-1), this protein is Probable alpha-L-glutamate ligase 1.